Reading from the N-terminus, the 554-residue chain is Outer envelope protein 61 (554 aa).

Residues 1–525 (MFNGLMDPEM…GMEKAKKAKK (525 aa)) are Cytoplasmic-facing. TPR repeat units lie at residues 103-136 (AQML…LKEI) and 180-213 (VKAL…SPED). 2 disordered regions span residues 245–269 (TEEN…AQGV) and 395–439 (APAS…PSAP). A compositionally biased stretch (basic and acidic residues) spans 254-263 (ENKKPSKEAN). A compositionally biased stretch (low complexity) spans 412-423 (SLGASGSSSGNS). The helical transmembrane segment at 526–546 (WLFGKGGLIFAILMLVLAMVL) threads the bilayer. The Lumenal portion of the chain corresponds to 547–554 (HRLGYIGN).

In terms of assembly, interacts (via TPR region) with HSP70-1, but not with HSP90-2. Interacts with ERDJ2A and ERDJ2B. In the ER membrane, associates with ERDJ2 in membrane complexes of 140 and 200 kDa and specifically interacts with the HSP70 and HSP90 chaperones via its TPR domain. In terms of tissue distribution, ubiquitous. Highest expression in leaves and lowest in roots.

Its subcellular location is the endoplasmic reticulum membrane. The protein resides in the plastid. It is found in the chloroplast outer membrane. In terms of biological role, plays a role in protein import into the endoplasmic reticulum (ER). May function as chaperone docking protein during post-translational protein translocation into the ER. Chaperone receptor mediating Hsp70-dependent protein targeting to chloroplasts. Interacts specifically with some chloroplast precursors, but not with mitochondrial precursors. Able to select precursors for delivery to the chloroplast translocase independently of Hsp70. The chain is Outer envelope protein 61 (OEP61) from Arabidopsis thaliana (Mouse-ear cress).